The following is a 313-amino-acid chain: Proline-rich protein 3 (313 aa).

The N-terminal stretch at 1-22 is a signal peptide; that stretch reads MAITRSSLAICLILSLVTITTA. Positions 27–312 are 35 X 5 AA approximate repeats; sequence PSSPPVYKSP…GPKAAPATPK (286 aa). 35 tandem repeats follow at residues 30 to 34, 35 to 39, 40 to 43, 44 to 48, 49 to 53, 54 to 57, 58 to 62, 64 to 67, 68 to 72, 73 to 77, 82 to 86, 87 to 91, 92 to 96, 97 to 101, 102 to 105, 106 to 110, 111 to 115, 116 to 120, 121 to 125, 126 to 131, 132 to 136, 137 to 141, 142 to 146, 147 to 150, 151 to 155, 157 to 163, 164 to 168, 169 to 174, 175 to 181, 182 to 186, 187 to 229, 258 to 262, 266 to 270, 298 to 302, and 308 to 312.

Belongs to the plant proline-rich protein superfamily. ENOD12 family. Exclusively expressed in roots, particularly in root hairs-containing regions, and especially in root hairs.

The protein resides in the secreted. It is found in the cell wall. In terms of biological role, may contribute to cell wall structure in root hairs. The polypeptide is Proline-rich protein 3 (PRP3) (Arabidopsis thaliana (Mouse-ear cress)).